Reading from the N-terminus, the 274-residue chain is Formamidopyrimidine-DNA glycosylase (274 aa).

Residue P2 is the Schiff-base intermediate with DNA of the active site. The active-site Proton donor is E3. Catalysis depends on K58, which acts as the Proton donor; for beta-elimination activity. DNA-binding residues include H91, R110, and K152. The FPG-type zinc finger occupies 237–271 (KVYGRKNLPCLVCENKIETVVIAGRHSAFCPHCQP). The active-site Proton donor; for delta-elimination activity is R261.

Belongs to the FPG family. In terms of assembly, monomer. It depends on Zn(2+) as a cofactor.

It carries out the reaction Hydrolysis of DNA containing ring-opened 7-methylguanine residues, releasing 2,6-diamino-4-hydroxy-5-(N-methyl)formamidopyrimidine.. The enzyme catalyses 2'-deoxyribonucleotide-(2'-deoxyribose 5'-phosphate)-2'-deoxyribonucleotide-DNA = a 3'-end 2'-deoxyribonucleotide-(2,3-dehydro-2,3-deoxyribose 5'-phosphate)-DNA + a 5'-end 5'-phospho-2'-deoxyribonucleoside-DNA + H(+). Functionally, involved in base excision repair of DNA damaged by oxidation or by mutagenic agents. Acts as a DNA glycosylase that recognizes and removes damaged bases. Has a preference for oxidized purines, such as 7,8-dihydro-8-oxoguanine (8-oxoG). Has AP (apurinic/apyrimidinic) lyase activity and introduces nicks in the DNA strand. Cleaves the DNA backbone by beta-delta elimination to generate a single-strand break at the site of the removed base with both 3'- and 5'-phosphates. The protein is Formamidopyrimidine-DNA glycosylase of Legionella pneumophila subsp. pneumophila (strain Philadelphia 1 / ATCC 33152 / DSM 7513).